The sequence spans 504 residues: DnaJ homolog subfamily C member 3 (504 aa).

An N-terminal signal peptide occupies residues 1–31 (MVAPGSVTSRLGSVFPFLLVLVDLQYEGAEC). TPR repeat units follow at residues 37–70 (VEKHLELGKKLLAAGQLADALSQFHAAVDGDPDN), 72–104 (IAYYRRATVFLAMGKSKAALPDLTKVIQLKMDF), 105–138 (TAARLQRGHLLLKQGKLDEAEDDFKKVLKSNPSE), 154–187 (MQRLRSQALNAFGSGDYTAAIAFLDKILEVCVWD), 189–221 (ELRELRAECFIKEGEPRKAISDLKAASKLKNDN), 222–255 (TEAFYKISTLYYQLGDHELSLSEVRECLKLDQDH), 268–301 (LNKLIESAEELIRDGRYTDATSKYESVMKTEPSI), 306–339 (VRSKERICHCFSKDEKPVEAIRVCSEVLQMEPDN), and 340–373 (VNALKDRAEAYLIEEMYDEAIQDYETAQEHNEND). Cys-248 and Cys-258 are oxidised to a cystine. A Phosphoserine; by FAM20C modification is found at Ser-274. Residues Cys-313 and Cys-329 are joined by a disulfide bond. A flexible linker region spans residues 375–393 (QIREGLEKAQRLLKQSQKR). One can recognise a J domain in the interval 394–462 (DYYKILGVKR…EMRKKFDDGE (69 aa)). The tract at residues 451–481 (DPEMRKKFDDGEDPLDAESQQGGGGNPFHRS) is disordered.

In terms of assembly, interacts with EIF2AK4/GCN2; this interaction occurs under endoplasmic reticulum (ER) stress, hypothermic and amino acid starving stress conditions and inhibits EIF2AK4/GCN2 kinase activity. Interacts with EIF2AK3. Interacts with EIF2AK2. Forms a trimeric complex with DNAJB1 and HSPA8. Interacts with THAP12. In terms of tissue distribution, widely expressed with high level in the pancreas and testis. Also expressed in cell lines with different levels.

The protein localises to the endoplasmic reticulum. Involved in the unfolded protein response (UPR) during endoplasmic reticulum (ER) stress. Acts as a negative regulator of the EIF2AK4/GCN2 kinase activity by preventing the phosphorylation of eIF-2-alpha at 'Ser-52' and hence attenuating general protein synthesis under ER stress, hypothermic and amino acid starving stress conditions. Co-chaperone of HSPA8/HSC70, it stimulates its ATPase activity. May inhibit both the autophosphorylation of EIF2AK2/PKR and the ability of EIF2AK2 to catalyze phosphorylation of the EIF2A. May inhibit EIF2AK3/PERK activity. The chain is DnaJ homolog subfamily C member 3 (DNAJC3) from Homo sapiens (Human).